The sequence spans 441 residues: Glutamate--tRNA ligase 1 (441 aa).

A 'HIGH' region motif is present at residues 8–18 (PSPTGYIHIGN). Residues 239–243 (ALSKR) carry the 'KMSKS' region motif. K242 lines the ATP pocket.

This sequence belongs to the class-I aminoacyl-tRNA synthetase family. Glutamate--tRNA ligase type 1 subfamily. In terms of assembly, monomer.

It localises to the cytoplasm. The catalysed reaction is tRNA(Glu) + L-glutamate + ATP = L-glutamyl-tRNA(Glu) + AMP + diphosphate. Functionally, catalyzes the attachment of glutamate to tRNA(Glu) in a two-step reaction: glutamate is first activated by ATP to form Glu-AMP and then transferred to the acceptor end of tRNA(Glu). This is Glutamate--tRNA ligase 1 from Roseobacter denitrificans (strain ATCC 33942 / OCh 114) (Erythrobacter sp. (strain OCh 114)).